Reading from the N-terminus, the 763-residue chain is Amine oxidase [copper-containing] 3 (763 aa).

Over 1 to 6 (MNQKTT) the chain is Cytoplasmic. The helical; Signal-anchor for type II membrane protein transmembrane segment at 7–27 (LVLLALAVITIFALVCVLIAG) threads the bilayer. Over 28 to 763 (RGGDGGEASQ…AFSHGGFFTN (736 aa)) the chain is Extracellular. N137 carries N-linked (GlcNAc...) asparagine glycosylation. C198 and C199 are disulfide-bonded. N232 and N294 each carry an N-linked (GlcNAc...) asparagine glycan. D386 serves as the catalytic Proton acceptor. Residues C404 and C430 are joined by a disulfide bond. Y471 serves as the catalytic Schiff-base intermediate with substrate; via topaquinone. At Y471 the chain carries 2',4',5'-topaquinone. Cu(2+)-binding residues include H520 and H522. The Ca(2+) site is built by D529, L530, D531, and E572. N618 is a glycosylation site (N-linked (GlcNAc...) asparagine). Ca(2+)-binding residues include E641, F663, and N665. A glycan (N-linked (GlcNAc...) asparagine) is linked at N666. The Ca(2+) site is built by E667, D673, and L674. A Cu(2+)-binding site is contributed by H684. C734 and C741 form a disulfide bridge.

It belongs to the copper/topaquinone oxidase family. Homodimer; disulfide-linked. Probably forms heterodimers with AOC2. The cofactor is Cu(2+). Requires Ca(2+) as cofactor. It depends on L-topaquinone as a cofactor. Topaquinone (TPQ) is generated by copper-dependent autoxidation of a specific tyrosyl residue. Post-translationally, N- and O-glycosylated.

It localises to the cell membrane. The catalysed reaction is methylamine + O2 + H2O = formaldehyde + H2O2 + NH4(+). The enzyme catalyses benzylamine + O2 + H2O = benzaldehyde + H2O2 + NH4(+). It catalyses the reaction 2-phenylethylamine + O2 + H2O = 2-phenylacetaldehyde + H2O2 + NH4(+). Functionally, catalyzes the oxidative deamination of primary amines to the corresponding aldehydes with the concomitant production of hydrogen peroxide and ammonia. Has a preference for the primary monoamines methylamine and benzylamine. Could also act on 2-phenylethylamine but much less efficiently. At endothelial cells surface can also function as a cell adhesion protein that participates in lymphocyte extravasation and recirculation by mediating the binding of lymphocytes to peripheral lymph node vascular endothelial cells in an L-selectin-independent fashion. The polypeptide is Amine oxidase [copper-containing] 3 (Bos taurus (Bovine)).